We begin with the raw amino-acid sequence, 240 residues long: Ribosomal RNA small subunit methyltransferase G (240 aa).

S-adenosyl-L-methionine is bound by residues G79, F84, 130-131, and R149; that span reads AE.

The protein belongs to the methyltransferase superfamily. RNA methyltransferase RsmG family.

The protein localises to the cytoplasm. In terms of biological role, specifically methylates the N7 position of a guanine in 16S rRNA. The protein is Ribosomal RNA small subunit methyltransferase G of Desulforamulus reducens (strain ATCC BAA-1160 / DSM 100696 / MI-1) (Desulfotomaculum reducens).